We begin with the raw amino-acid sequence, 147 residues long: MGEIILNIRELNLKGEVYRVVNGYAKVKFEEFGVAENMIKYKFISPWIALNEKNYLEYKELDEDGKKELLEKILVGNILSMSKYLDYTVEEKLKAGLLEYEDFVVKYKGNKFIGFWGEFLVNFNIPNYLGIGRKVSKGFGSVIRVEE.

To M.jannaschii MJ1086 N-terminal region.

This is an uncharacterized protein from Methanocaldococcus jannaschii (strain ATCC 43067 / DSM 2661 / JAL-1 / JCM 10045 / NBRC 100440) (Methanococcus jannaschii).